The primary structure comprises 397 residues: MNENIAEKFRADGVARPNWSAVFAVAFCVACLITVEFLPVSLLTPMAQDLGISEGVAGQSVTVTAFVAMFSSLFITQIIQATDRRYIVILFAVLLTASCLMVSFANSFTLLLLGRACLGLALGGFWAISASLTMRLVPARTVPKALSVIFGAVSIALVIAAPLGSFLGGIIGWRNVFNAAAVMGVLCVIWVVKSLPSLPGEPSHQKQNMFSLLQRPGVMAGMIAIFMSFAGQFAFFTYIRPVYMNLAGFDVDGLTLVLLSFGIASFVGTSFSSYVLKRSVKLALAGAPLLLALSALTLIVWGSDKTVAAAIAIIWGLAFALVPVGWSTWITRSLADQAEKAGSIQVAVIQLANTCGAAVGGYALDNFGLLSPLALSGGLMLLTALVVAAKVRITPMS.

Residues 1–21 (MNENIAEKFRADGVARPNWSA) lie on the Cytoplasmic side of the membrane. Residues 22–42 (VFAVAFCVACLITVEFLPVSL) traverse the membrane as a helical segment. Residues 43–54 (LTPMAQDLGISE) lie on the Periplasmic side of the membrane. The chain crosses the membrane as a helical span at residues 55 to 75 (GVAGQSVTVTAFVAMFSSLFI). Topologically, residues 76 to 85 (TQIIQATDRR) are cytoplasmic. Residues 86–106 (YIVILFAVLLTASCLMVSFAN) traverse the membrane as a helical segment. Position 107 (serine 107) is a topological domain, periplasmic. The helical transmembrane segment at 108-128 (FTLLLLGRACLGLALGGFWAI) threads the bilayer. The Cytoplasmic segment spans residues 129 to 147 (SASLTMRLVPARTVPKALS). A helical transmembrane segment spans residues 148 to 168 (VIFGAVSIALVIAAPLGSFLG). The Periplasmic portion of the chain corresponds to 169–175 (GIIGWRN). A helical transmembrane segment spans residues 176–196 (VFNAAAVMGVLCVIWVVKSLP). The Cytoplasmic segment spans residues 197 to 215 (SLPGEPSHQKQNMFSLLQR). A helical transmembrane segment spans residues 216–236 (PGVMAGMIAIFMSFAGQFAFF). The Periplasmic segment spans residues 237–255 (TYIRPVYMNLAGFDVDGLT). A helical membrane pass occupies residues 256-276 (LVLLSFGIASFVGTSFSSYVL). The Cytoplasmic segment spans residues 277 to 281 (KRSVK). A helical transmembrane segment spans residues 282 to 302 (LALAGAPLLLALSALTLIVWG). Over 303–305 (SDK) the chain is Periplasmic. A helical transmembrane segment spans residues 306 to 326 (TVAAAIAIIWGLAFALVPVGW). Residues 327-343 (STWITRSLADQAEKAGS) are Cytoplasmic-facing. Residues 344-364 (IQVAVIQLANTCGAAVGGYAL) form a helical membrane-spanning segment. Residues 365–366 (DN) are Periplasmic-facing. A helical transmembrane segment spans residues 367-387 (FGLLSPLALSGGLMLLTALVV). Topologically, residues 388-397 (AAKVRITPMS) are cytoplasmic.

Belongs to the major facilitator superfamily. DHA1 family. NepI (TC 2.A.1.2.26) subfamily.

The protein localises to the cell inner membrane. It catalyses the reaction inosine(in) + H(+)(out) = inosine(out) + H(+)(in). The catalysed reaction is guanosine(in) + H(+)(out) = guanosine(out) + H(+)(in). Its function is as follows. Involved in the efflux of purine ribonucleosides, such as inosine and guanosine. In Salmonella paratyphi A (strain ATCC 9150 / SARB42), this protein is Purine ribonucleoside efflux pump NepI.